The chain runs to 428 residues: Mitochondrial distribution and morphology protein 12 (428 aa).

The 387-residue stretch at 1–387 (MSFDINWNQL…WPSWICIDMN (387 aa)) folds into the SMP-LTD domain. Disordered stretches follow at residues 75-168 (VMNE…APPL) and 387-428 (NDDD…EAGE). The segment covering 81–96 (NDSKDEHLKNHGDGIN) has biased composition (basic and acidic residues). Acidic residues predominate over residues 106–133 (LDDEDEDDEDDDEDDEDEEEEDEDDYDD). Polar residues predominate over residues 146-161 (LNFNENSTTPSANSFA). The span at 387–403 (NDDDDEEEEEEESEDND) shows a compositional bias: acidic residues. The span at 412 to 428 (NDGKHGDGRTDETEAGE) shows a compositional bias: basic and acidic residues.

The protein belongs to the MDM12 family. Component of the ER-mitochondria encounter structure (ERMES) or MDM complex, composed of MMM1, MDM10, MDM12 and MDM34. An MMM1 homodimer associates with one molecule of MDM12 on each side in a pairwise head-to-tail manner, and the SMP-LTD domains of MMM1 and MDM12 generate a continuous hydrophobic tunnel for phospholipid trafficking.

It localises to the mitochondrion outer membrane. The protein localises to the endoplasmic reticulum membrane. Its function is as follows. Component of the ERMES/MDM complex, which serves as a molecular tether to connect the endoplasmic reticulum (ER) and mitochondria. Components of this complex are involved in the control of mitochondrial shape and protein biogenesis, and function in nonvesicular lipid trafficking between the ER and mitochondria. MDM12 is required for the interaction of the ER-resident membrane protein MMM1 and the outer mitochondrial membrane-resident beta-barrel protein MDM10. The MDM12-MMM1 subcomplex functions in the major beta-barrel assembly pathway that is responsible for biogenesis of all mitochondrial outer membrane beta-barrel proteins, and acts in a late step after the SAM complex. The MDM10-MDM12-MMM1 subcomplex further acts in the TOM40-specific pathway after the action of the MDM12-MMM1 complex. Essential for establishing and maintaining the structure of mitochondria and maintenance of mtDNA nucleoids. The sequence is that of Mitochondrial distribution and morphology protein 12 from Candida albicans (strain SC5314 / ATCC MYA-2876) (Yeast).